Reading from the N-terminus, the 1286-residue chain is Autotransporter adhesin AIDA-I (1286 aa).

Positions 1 to 49 are cleaved as a signal peptide; that stretch reads MNKAYSIIWSHSRQAWIVASELARGHGFVLAKNTLLVLAVVSTIGNAFA. Ser-102, Ser-111, and Ser-116 each carry an O-alpha-linked (glycero-D-manno-heptose) serine glycan. Thr-154 is a glycosylation site (O-alpha-linked (glycero-D-manno-heptose) threonine). O-alpha-linked (glycero-D-manno-heptose) serine glycosylation is found at Ser-242, Ser-252, Ser-334, Ser-391, Ser-409, Ser-539, Ser-545, Ser-558, Ser-569, Ser-576, Ser-577, and Ser-582. In terms of domain architecture, Autotransporter spans 998 to 1286; the sequence is TQPESASVWM…SGALGIKYSF (289 aa). The beta stranded transmembrane segment at 1006–1012 threads the bilayer; it reads WMKITGG. The Extracellular portion of the chain corresponds to 1013–1029; the sequence is ISSGKLNDGQNKTTTNQ. A beta stranded transmembrane segment spans residues 1030–1040; that stretch reads FINQLGGDIYK. Over 1041 to 1047 the chain is Periplasmic; sequence FHAEQLG. A beta stranded transmembrane segment spans residues 1048–1058; sequence DFTLGIMGGYA. Residues 1059-1079 lie on the Extracellular side of the membrane; that stretch reads NAKGKTINYTSNKAARNTLDG. A beta stranded membrane pass occupies residues 1080–1087; it reads YSVGVYGT. Residues 1088–1097 lie on the Periplasmic side of the membrane; that stretch reads WYQNGENATG. The beta stranded transmembrane segment at 1098 to 1108 threads the bilayer; the sequence is LFAETWMQYNW. Residues 1109 to 1126 lie on the Extracellular side of the membrane; the sequence is FNASVKGDGLEEEKYNLN. The chain crosses the membrane as a beta stranded span at residues 1127 to 1138; sequence GLTASAGGGYNL. The Periplasmic segment spans residues 1139–1152; that stretch reads NVHTWTSPEGITGE. The beta stranded transmembrane segment at 1153–1164 threads the bilayer; that stretch reads FWLQPHLQAVWM. The Extracellular segment spans residues 1165 to 1186; the sequence is GVTPDTHQEDNGTVVQGAGKNN. The beta stranded transmembrane segment at 1187 to 1198 threads the bilayer; the sequence is IQTKAGIRASWK. The Periplasmic segment spans residues 1199 to 1210; it reads VKSTLDKDTGRR. The chain crosses the membrane as a beta stranded span at residues 1211–1221; that stretch reads FRPYIEANWIH. Residues 1222 to 1242 are Extracellular-facing; it reads NTHEFGVKMSDDSQLLSGSRN. The beta stranded transmembrane segment at 1243-1253 threads the bilayer; that stretch reads QGEIKTGIEGV. At 1254-1259 the chain is on the periplasmic side; sequence ITQNLS. The beta stranded transmembrane segment at 1260–1267 threads the bilayer; sequence VNGGVAYQ. Residues 1268–1275 lie on the Extracellular side of the membrane; it reads AGGHGSNA. A beta stranded transmembrane segment spans residues 1276–1284; that stretch reads ISGALGIKY. The Periplasmic segment spans residues 1285–1286; the sequence is SF.

Intercellular AIDA-AIDA interaction is responsible for bacterial autoaggregation. AIDA can also interact with antigen 43 (Ag43), and the resultant intercellular AIDA-Ag43 interaction causes cell aggregation. In terms of processing, glycosylated on serine residues by AHH and AAH2 in the cytoplasm. Glycosylated with an average of 19 heptose residues. Glycosylated with either ADP-L, D-heptose or ADP-D, D-heptose. Glycosylation is required for protein folding/stabilization and resistance to protease-mediated degradation. Glycosylation is required for bacteria adhesion to mammalian cells. Glycosylation is dispensable for cell outer membrane localization. Glycosylation is dispensable for AIDA-mediated cell-cell aggregation and induction of biofilm formation. Glycosylation is dispensable for interaction with Ag43.

The protein localises to the periplasm. It localises to the secreted. It is found in the cell surface. The protein resides in the cell outer membrane. Potent bacterial adhesin that mediates bacterial attachment to a broad variety of human and other mammalian cells. Has additional virulence properties, as it is capable of mediating bacterial autoaggregation via intercellular self-recognition and it is a highly efficient initiator of biofilm formation. The polypeptide is Autotransporter adhesin AIDA-I (aidA) (Escherichia coli).